Consider the following 280-residue polypeptide: Hydroxyethylthiazole kinase (280 aa).

Met50 is a substrate binding site. ATP is bound by residues Lys125 and Thr178. Gly205 serves as a coordination point for substrate.

It belongs to the Thz kinase family. Requires Mg(2+) as cofactor.

It carries out the reaction 5-(2-hydroxyethyl)-4-methylthiazole + ATP = 4-methyl-5-(2-phosphooxyethyl)-thiazole + ADP + H(+). Its pathway is cofactor biosynthesis; thiamine diphosphate biosynthesis; 4-methyl-5-(2-phosphoethyl)-thiazole from 5-(2-hydroxyethyl)-4-methylthiazole: step 1/1. Catalyzes the phosphorylation of the hydroxyl group of 4-methyl-5-beta-hydroxyethylthiazole (THZ). The sequence is that of Hydroxyethylthiazole kinase from Lacticaseibacillus casei (strain BL23) (Lactobacillus casei).